A 280-amino-acid polypeptide reads, in one-letter code: UPF0494 membrane protein C750.06c (280 aa).

4 helical membrane passes run 107 to 127 (WPLL…KFEV), 144 to 164 (IWVP…SLIF), 178 to 198 (VIIA…GMII), and 199 to 219 (AALG…LYFG).

This sequence belongs to the UPF0494 family.

It localises to the cytoplasm. The protein resides in the vacuole. It is found in the membrane. This Schizosaccharomyces pombe (strain 972 / ATCC 24843) (Fission yeast) protein is UPF0494 membrane protein C750.06c.